A 453-amino-acid polypeptide reads, in one-letter code: Tubulin alpha-1 chain (453 aa).

Residues Q11, E71, G144, T145, T179, N206, and N228 each contribute to the GTP site. Position 71 (E71) interacts with Mg(2+). Residue E254 is part of the active site. A disordered region spans residues 433 to 453 (EEVGAETADGDGEEEEFGEEY).

This sequence belongs to the tubulin family. Dimer of alpha and beta chains. A typical microtubule is a hollow water-filled tube with an outer diameter of 25 nm and an inner diameter of 15 nM. Alpha-beta heterodimers associate head-to-tail to form protofilaments running lengthwise along the microtubule wall with the beta-tubulin subunit facing the microtubule plus end conferring a structural polarity. Microtubules usually have 13 protofilaments but different protofilament numbers can be found in some organisms and specialized cells. Requires Mg(2+) as cofactor. Undergoes a tyrosination/detyrosination cycle, the cyclic removal and re-addition of a C-terminal tyrosine residue by the enzymes tubulin tyrosine carboxypeptidase (TTCP) and tubulin tyrosine ligase (TTL), respectively.

The protein localises to the cytoplasm. It localises to the cytoskeleton. The enzyme catalyses GTP + H2O = GDP + phosphate + H(+). Its function is as follows. Tubulin is the major constituent of microtubules, a cylinder consisting of laterally associated linear protofilaments composed of alpha- and beta-tubulin heterodimers. Microtubules grow by the addition of GTP-tubulin dimers to the microtubule end, where a stabilizing cap forms. Below the cap, tubulin dimers are in GDP-bound state, owing to GTPase activity of alpha-tubulin. In Pelvetia fastigiata (Brown alga), this protein is Tubulin alpha-1 chain (TUBA1).